Consider the following 89-residue polypeptide: Gamma-bungarotoxin (89 aa).

Positions methionine 1 to threonine 21 are cleaved as a signal peptide. 5 disulfide bridges follow: cysteine 24–cysteine 45, cysteine 27–cysteine 32, cysteine 38–cysteine 66, cysteine 70–cysteine 81, and cysteine 82–cysteine 87. Positions arginine 54–aspartate 56 match the Cell attachment site motif.

The protein belongs to the three-finger toxin family. Ancestral subfamily. Orphan group V sub-subfamily. Expressed by the venom gland.

It localises to the secreted. In terms of biological role, exhibits M2 muscarinic acetylcholine receptor (CHRM2)-blocking activity, but has a weak binding activity toward nicotinic AChR. Moreover, it inhibits collagen-induced platelet aggregation. The chain is Gamma-bungarotoxin from Bungarus multicinctus (Many-banded krait).